The following is a 216-amino-acid chain: Hexitol phosphatase A (216 aa).

Residue D9 is the Nucleophile of the active site. Residues D9 and D11 each coordinate a divalent metal cation. Substrate-binding positions include D9–D11, T106–S107, and K138. D11 (proton donor) is an active-site residue. D163 is a binding site for a divalent metal cation.

This sequence belongs to the HAD-like hydrolase superfamily. CbbY/CbbZ/Gph/YieH family. Mg(2+) serves as cofactor. Mn(2+) is required as a cofactor. The cofactor is Co(2+).

It catalyses the reaction sugar phosphate + H2O = sugar + phosphate.. The catalysed reaction is D-mannitol 1-phosphate + H2O = D-mannitol + phosphate. It carries out the reaction D-sorbitol 6-phosphate + H2O = D-sorbitol + phosphate. In terms of biological role, sugar-phosphate phosphohydrolase that appears to contribute to butanol tolerance. Catalyzes the dephosphorylation of D-mannitol 1-phosphate and D-sorbitol 6-phosphate. Is also able to dephosphorylate other sugar phosphates in vitro including ribose-5-phosphate (Rib5P), 2-deoxyribose-5-phosphate, fructose-1-phosphate (Fru1P), fructose-6-phosphate (Fru6P), and glucose-6-phosphate (Glu6P). Selectively hydrolyzes beta-D-glucose-1-phosphate (bGlu1P) and has no activity with the alpha form. The polypeptide is Hexitol phosphatase A (Escherichia coli (strain K12)).